The following is a 674-amino-acid chain: Probable L-type lectin-domain containing receptor kinase II.1 (674 aa).

Positions methionine 1–alanine 24 are cleaved as a signal peptide. The Extracellular segment spans residues glutamine 25–glutamate 301. Residues aspartate 28 to lysine 274 are legume-lectin like. N-linked (GlcNAc...) asparagine glycosylation is found at asparagine 57, asparagine 117, asparagine 133, asparagine 185, asparagine 210, and asparagine 242. Residues valine 302–tyrosine 322 form a helical membrane-spanning segment. The Cytoplasmic segment spans residues lysine 323 to arginine 674. The Protein kinase domain occupies phenylalanine 355–isoleucine 633. ATP contacts are provided by residues leucine 361–valine 369 and lysine 383. Aspartate 480 acts as the Proton acceptor in catalysis.

The protein in the C-terminal section; belongs to the protein kinase superfamily. Ser/Thr protein kinase family. In the N-terminal section; belongs to the leguminous lectin family.

Its subcellular location is the cell membrane. It carries out the reaction L-seryl-[protein] + ATP = O-phospho-L-seryl-[protein] + ADP + H(+). The catalysed reaction is L-threonyl-[protein] + ATP = O-phospho-L-threonyl-[protein] + ADP + H(+). This chain is Probable L-type lectin-domain containing receptor kinase II.1 (LECRK21), found in Arabidopsis thaliana (Mouse-ear cress).